The following is a 538-amino-acid chain: Guanine nucleotide-binding protein-like 3 (538 aa).

A compositionally biased stretch (basic residues) spans 1 to 45; it reads MKRPKLKKASKRMTCHKRYKIQKKVREHHRKLRKEAKKRGHKKPR. Disordered stretches follow at residues 1–57 and 69–126; these read MKRP…APFK and QQLE…NPKK. The basic stretch occupies residues 2 to 46; the sequence is KRPKLKKASKRMTCHKRYKIQKKVREHHRKLRKEAKKRGHKKPRK. The stretch at 54–95 forms a coiled coil; the sequence is APFKEALLREAELRKQQLEELKQQQKLDRQKEQERKRKLEVS. The segment covering 69 to 93 has biased composition (basic and acidic residues); that stretch reads QQLEELKQQQKLDRQKEQERKRKLE. The residue at position 79 (Lys79) is an N6-acetyllysine. Lys91 participates in a covalent cross-link: Glycyl lysine isopeptide (Lys-Gly) (interchain with G-Cter in SUMO2). 2 positions are modified to phosphoserine: Ser95 and Ser101. A compositionally biased stretch (basic residues) spans 114-126; the sequence is RKKAKAGKQNPKK. A CP-type G domain is found at 129-307; sequence CQELKKVIEA…IIDSPCLIIS (179 aa). 176–179 contributes to the GTP binding site; sequence NKSD. Glycyl lysine isopeptide (Lys-Gly) (interchain with G-Cter in SUMO2) cross-links involve residues Lys177, Lys248, Lys262, and Lys270. 256 to 263 lines the GTP pocket; sequence GFPNVGKS. The tract at residues 277–451 is intermediate; it reads VGISMGLTRS…HLTNRILFRS (175 aa). GTP is bound at residue 300–303; the sequence is DSPC. The span at 460-475 shows a compositional bias: basic and acidic residues; it reads DEKDIVEESPRQTEDK. An acidic region spans residues 460–532; the sequence is DEKDIVEESP…RASQEDETYD (73 aa). The disordered stretch occupies residues 460 to 538; that stretch reads DEKDIVEESP…ETYDFTTDYI (79 aa). Ser493, Ser505, and Ser518 each carry phosphoserine. Positions 506 to 518 are enriched in polar residues; the sequence is PEQSTAGKPSDGS.

This sequence belongs to the TRAFAC class YlqF/YawG GTPase family. As to quaternary structure, interacts with MDM2; this interaction stabilizes MDM2. Interaction with MDM2 occurs in the nucleoplasm and is triggered by a nucleolar release mechanism, such as mitosis-induced nucleolar disassembly. Indirectly interacts with TP53, via MDM2-binding. Interacts with TSC22D1 isoform 2. As to expression, expressed in the adult bone marrow population that is enriched in hematopoietic stem cells.

The protein resides in the nucleus. It localises to the nucleolus. May be required to maintain the proliferative capacity of stem cells. Stabilizes MDM2 by preventing its ubiquitination, and hence proteasomal degradation. The sequence is that of Guanine nucleotide-binding protein-like 3 (Gnl3) from Mus musculus (Mouse).